The chain runs to 256 residues: Small ribosomal subunit protein uS2 (256 aa).

The protein belongs to the universal ribosomal protein uS2 family.

This Streptococcus agalactiae serotype III (strain NEM316) protein is Small ribosomal subunit protein uS2.